A 722-amino-acid chain; its full sequence is MGALRWLSLAAAASSALALTPEQLISAPRRSEAIPNPSGNIAVFSSSQYSFDTHESSSAWNLLDLRSGKITPLTNDSNVSEIVWLNDSTLLYINGTNAQIPGGSELWVSGLSNFPSGYKAASLPASFSGLKAVTTKSGDIKFVAYAQSYRNGTAYNEELAETYLSSARIYDSIYVRHWDTYLTTTFNAVFSGTLKKTQHARYASAGSLKNLVAPIPNAESPYPPFGGSSDYDISADGKWVAYKSKAPDVPQANHTTAYIYLVPHDGSETPVPINGPGSAPEGIEGDSNNPVFSPDSKSLAYLQMKDPTYESDRRVIYIYDLASKKITPLATEWDRSPDSLKWTDKSTIVAGSEDEGSGNLFLIPVKKATGDFIPEKLTNGKYASAFYLASGNTLVVTGSTLYSSWYVDLVSLNPKRGTIKNLVSAHEIDPELSGLGPEDISDIWFAGNWTDIHAWVIYPEGFDKSKTYPLAFLIHGGPQGAWYNSWSSRWNPKVFADQGYVVVAPNPTGSTGYGDELTDAIQNNWGGAPYEDLVKAWEYVRDNLDYVDTDRGVAAGASYGGFMVNWIQGSDLGREFKALVTHDGTFVADAKISTEELWFMEREFNGTFWDVRDNYRRFDPSAPERILRFATPHLIIHNDLDYRLPVAEGLSLFNVLQERGVPSRFLNFPDENHWVTSPENSLVWHQQVLGWLNKYSGIAEDNEDAVTLEDTVVPVVNINPPA.

The N-terminal stretch at 1-18 (MGALRWLSLAAAASSALA) is a signal peptide. N-linked (GlcNAc...) asparagine glycosylation is found at Asn-75, Asn-78, Asn-86, Asn-94, Asn-151, Asn-253, and Asn-448. Catalysis depends on Ser-558, which acts as the Charge relay system. N-linked (GlcNAc...) asparagine glycosylation is present at Asn-605. Active-site charge relay system residues include Asp-641 and His-673.

This sequence belongs to the peptidase S9C family.

The protein localises to the secreted. Extracellular dipeptidyl-peptidase which removes N-terminal dipeptides sequentially from polypeptides having unsubstituted N-termini. This is Probable dipeptidyl-peptidase 5 (dpp5) from Emericella nidulans (strain FGSC A4 / ATCC 38163 / CBS 112.46 / NRRL 194 / M139) (Aspergillus nidulans).